The chain runs to 597 residues: Protein disulfide isomerase-like 1-4 (597 aa).

An N-terminal signal peptide occupies residues 1-25; it reads MAFRVLLLFSLTALLIFSAVSPSFA. 2 stretches are compositionally biased toward acidic residues: residues 37–49 and 61–84; these read LSFLEDLKEDDVP and DEFEGGEEEDPDMYNDDDDEEGDF. Positions 37-101 are disordered; sequence LSFLEDLKED…SDPLPTPEID (65 aa). Residues 85–208 enclose the Thioredoxin 1 domain; it reads SDLGNPDSDP…IVTWVKKKIG (124 aa). N112 is a glycosylation site (N-linked (GlcNAc...) asparagine). Residues C132 and C135 each act as nucleophile in the active site. Residues C132 and C135 are joined by a disulfide bond. N-linked (GlcNAc...) asparagine glycosylation is found at N213 and N342. The region spanning 429–550 is the Thioredoxin 2 domain; the sequence is FYKSDPIPEK…FYKFLRKHAT (122 aa). Residues C471 and C474 each act as nucleophile in the active site. A disulfide bond links C471 and C474. N-linked (GlcNAc...) asparagine glycosylation occurs at N524. Positions 555 to 597 are disordered; that stretch reads LEKPASTESPKTAESTPKVETTETKESPDSTTKSSQSDSKDEL. The segment covering 560-573 has biased composition (polar residues); sequence STESPKTAESTPKV. The Prevents secretion from ER motif lies at 594–597; that stretch reads KDEL.

The protein belongs to the protein disulfide isomerase family. Interacts with MEE8 and MED37A. In terms of tissue distribution, expressed in germinating seedling, including the cotyledons and hypocotyl, in vascular tissues, in pollen grains, root tips, leaf trichomes, developing seeds and siliques.

It is found in the endoplasmic reticulum lumen. Its subcellular location is the golgi apparatus. It localises to the vacuole. The protein localises to the nucleus. The protein resides in the secreted. It is found in the cell wall. It catalyses the reaction Catalyzes the rearrangement of -S-S- bonds in proteins.. Acts as a protein-folding catalyst that interacts with nascent polypeptides to catalyze the formation, isomerization, and reduction or oxidation of disulfide bonds. In Arabidopsis thaliana (Mouse-ear cress), this protein is Protein disulfide isomerase-like 1-4 (PDIL1-4).